A 261-amino-acid polypeptide reads, in one-letter code: Pyridoxine 5'-phosphate synthase (261 aa).

Residue N6 participates in 3-amino-2-oxopropyl phosphate binding. 8–9 (DH) lines the 1-deoxy-D-xylulose 5-phosphate pocket. 3-amino-2-oxopropyl phosphate is bound at residue R17. H42 acts as the Proton acceptor in catalysis. Residues R44 and H49 each coordinate 1-deoxy-D-xylulose 5-phosphate. E69 (proton acceptor) is an active-site residue. T99 provides a ligand contact to 1-deoxy-D-xylulose 5-phosphate. H213 functions as the Proton donor in the catalytic mechanism. Residues G214 and 235–236 (GQ) contribute to the 3-amino-2-oxopropyl phosphate site.

The protein belongs to the PNP synthase family. As to quaternary structure, homooctamer; tetramer of dimers.

The protein resides in the cytoplasm. It catalyses the reaction 3-amino-2-oxopropyl phosphate + 1-deoxy-D-xylulose 5-phosphate = pyridoxine 5'-phosphate + phosphate + 2 H2O + H(+). It functions in the pathway cofactor biosynthesis; pyridoxine 5'-phosphate biosynthesis; pyridoxine 5'-phosphate from D-erythrose 4-phosphate: step 5/5. Its function is as follows. Catalyzes the complicated ring closure reaction between the two acyclic compounds 1-deoxy-D-xylulose-5-phosphate (DXP) and 3-amino-2-oxopropyl phosphate (1-amino-acetone-3-phosphate or AAP) to form pyridoxine 5'-phosphate (PNP) and inorganic phosphate. This chain is Pyridoxine 5'-phosphate synthase, found in Aliarcobacter butzleri (strain RM4018) (Arcobacter butzleri).